Consider the following 287-residue polypeptide: tRNA selenocysteine 1-associated protein 1 (287 aa).

RRM domains follow at residues 3–86 (ASLW…YATY) and 96–175 (YSLF…VAIP).

The protein belongs to the RRM TRSPAP family. As to quaternary structure, component of the tRNA(Sec) complex composed at least of EEFSEC, SECISBP2, SEPHS1, SEPSECS, TRNAU1AP and tRNA(Sec). Associates with mRNP and/or polysomes. Found in a complex with tRNA(Sec). Interacts with SEPSECS. Ubiquitous.

It localises to the nucleus. It is found in the cytoplasm. Involved in the early steps of selenocysteine biosynthesis and tRNA(Sec) charging to the later steps resulting in the cotranslational incorporation of selenocysteine into selenoproteins. Stabilizes the SECISBP2, EEFSEC and tRNA(Sec) complex. May be involved in the methylation of tRNA(Sec). Enhances efficiency of selenoproteins synthesis. The sequence is that of tRNA selenocysteine 1-associated protein 1 (Trnau1ap) from Rattus norvegicus (Rat).